The following is a 215-amino-acid chain: LexA repressor (215 aa).

Residues 28–48 constitute a DNA-binding region (H-T-H motif); it reads RAEIAAELGFSSPNAAEEHLR. Catalysis depends on for autocatalytic cleavage activity residues Ser-133 and Lys-170.

The protein belongs to the peptidase S24 family. As to quaternary structure, homodimer.

It catalyses the reaction Hydrolysis of Ala-|-Gly bond in repressor LexA.. Represses a number of genes involved in the response to DNA damage (SOS response), including recA and lexA. In the presence of single-stranded DNA, RecA interacts with LexA causing an autocatalytic cleavage which disrupts the DNA-binding part of LexA, leading to derepression of the SOS regulon and eventually DNA repair. This is LexA repressor from Burkholderia thailandensis (strain ATCC 700388 / DSM 13276 / CCUG 48851 / CIP 106301 / E264).